A 148-amino-acid polypeptide reads, in one-letter code: Glutamyl-tRNA(Gln) amidotransferase subunit C, mitochondrial (148 aa).

It belongs to the GatC family. Subunit of the heterotrimeric GatCAB amidotransferase (AdT) complex, composed of A, B and C subunits.

The protein resides in the mitochondrion. It carries out the reaction L-glutamyl-tRNA(Gln) + L-glutamine + ATP + H2O = L-glutaminyl-tRNA(Gln) + L-glutamate + ADP + phosphate + H(+). In terms of biological role, allows the formation of correctly charged Gln-tRNA(Gln) through the transamidation of misacylated Glu-tRNA(Gln) in the mitochondria. The reaction takes place in the presence of glutamine and ATP through an activated gamma-phospho-Glu-tRNA(Gln). The chain is Glutamyl-tRNA(Gln) amidotransferase subunit C, mitochondrial from Drosophila sechellia (Fruit fly).